Reading from the N-terminus, the 839-residue chain is Toll-like receptor 4 (839 aa).

The N-terminal stretch at 1–23 (MMSASRLAGTLIPAMAFLSCVRP) is a signal peptide. The Extracellular segment spans residues 24–631 (ESWEPCVEVV…SLNITCQMNK (608 aa)). C29 and C40 are joined by a disulfide. N-linked (GlcNAc...) asparagine glycosylation is present at N35. LRR repeat units lie at residues 55-76 (STKN…SFFS), 79-100 (ELQV…AYQS), 103-124 (HLST…AFSG), 127-148 (SLQK…PIGH), and 151-172 (TLKE…EYFS). A glycan (N-linked (GlcNAc...) asparagine) is linked at N173. 3 LRR repeats span residues 176 to 199 (NLEH…RVLH), 205 to 225 (NLSL…AFKE), and 227 to 247 (RLHK…KTCI). N205 carries N-linked (GlcNAc...) asparagine glycosylation. C281 and C306 are joined by a disulfide. 2 N-linked (GlcNAc...) asparagine glycosylation sites follow: N282 and N309. LRR repeat units follow at residues 331–351 (GWQH…LKLK), 352–373 (SLKR…VDLP), 374–394 (SLEF…CSQS), 400–422 (SLKY…LGLE), 423–444 (QLEH…SVFL), 448–456 (NLIYLDISH), 472–495 (SLEV…FTEL), 497–518 (NLTF…AFNS), 521–542 (SLQV…PYKC), and 545–565 (SLQV…QELQ). C390 and C391 form a disulfide bridge. N-linked (GlcNAc...) asparagine glycans are attached at residues N497 and N526. N-linked (GlcNAc...) asparagine glycosylation occurs at N575. The LRRCT domain maps to 579–629 (NDFACTCEHQSFLQWIKDQRQLLVEVERMECATPSDKQGMPVLSLNITCQM). Disulfide bonds link C583/C609 and C585/C627. 2 N-linked (GlcNAc...) asparagine glycosylation sites follow: N624 and N630. Residues 632–652 (TIIGVSVLSVLVVSVVAVLVY) traverse the membrane as a helical segment. Topologically, residues 653–839 (KFYFHLMLLA…GCNWQEATSI (187 aa)) are cytoplasmic. The TIR domain occupies 672-815 (NIYDAFVIYS…IFWRRLRKAL (144 aa)).

The protein belongs to the Toll-like receptor family. Belongs to the lipopolysaccharide (LPS) receptor, a multi-protein complex containing at least CD14, LY96 and TLR4. Binding to bacterial LPS leads to homodimerization. Interacts with LY96 via the extracellular domain. Interacts with MYD88 and TIRAP via their respective TIR domains. Interacts with NOX4. Interacts with CNPY3 and HSP90B1; this interaction is required for proper folding in the endoplasmic reticulum. Interacts with MAP3K21; this interaction leads to negative regulation of TLR4 signaling. Interacts with CD36, following CD36 stimulation by oxLDL or amyloid-beta 42, and forms a heterodimer with TLR6. The trimeric complex is internalized and triggers inflammatory response. LYN kinase activity facilitates TLR4-TLR6 heterodimerization and signal initiation. Interacts with TICAM1 in response to LPS in a WDFY1-dependent manner. Interacts with WDFY1 in response to LPS. Interacts with SMPDL3B. Interacts with CEACAM1; upon lipopolysaccharide stimulation, forms a complex including TLR4 and the phosphorylated form of SYK and CEACAM1, which in turn, recruits PTPN6 that dephosphorylates SYK, reducing the production of reactive oxygen species (ROS) and lysosome disruption, which in turn, reduces the activity of the inflammasome. Interacts with RFTN1; the interaction occurs in response to lipopolysaccharide stimulation. Interacts with SCIMP; the interaction occurs in response to lipopolysaccharide stimulation and is enhanced by phosphorylation of SCIMP by LYN. This interaction facilitates the phosphorylation of TLR4 by LYN which elicits a selective cytokine response in macrophages. Interacts with TRAF3IP3. Interacts with TREM1; this interaction enhances TLR4-mediated inflammatory response. Interacts with ZG16B/PAUF. Interacts with CD82; this interaction inhibits TLR4-mediated signaling pathway. Phosphorylated on tyrosine residues by LYN after binding lipopolysaccharide. In terms of processing, ubiquitinated by RNF128 via 'Lys-28'-linked polyubiquitin chains, leading to proteasomal degradation.

Its subcellular location is the cell membrane. It localises to the early endosome. The protein resides in the cell projection. The protein localises to the ruffle. Transmembrane receptor that functions as a pattern recognition receptor recognizing pathogen- and damage-associated molecular patterns (PAMPs and DAMPs) to induce innate immune responses via downstream signaling pathways. At the plasma membrane, cooperates with LY96 to mediate the innate immune response to bacterial lipopolysaccharide (LPS). Also involved in LPS-independent inflammatory responses triggered by free fatty acids, such as palmitate, and Ni(2+). Mechanistically, acts via MYD88, TIRAP and TRAF6, leading to NF-kappa-B activation, cytokine secretion and the inflammatory response. Alternatively, CD14-mediated TLR4 internalization via endocytosis is associated with the initiation of a MYD88-independent signaling via the TICAM1-TBK1-IRF3 axis leading to type I interferon production. In addition to the secretion of proinflammatory cytokines, initiates the activation of NLRP3 inflammasome and formation of a positive feedback loop between autophagy and NF-kappa-B signaling cascade. In complex with TLR6, promotes inflammation in monocytes/macrophages by associating with TLR6 and the receptor CD86. Upon ligand binding, such as oxLDL or amyloid-beta 42, the TLR4:TLR6 complex is internalized and triggers inflammatory response, leading to NF-kappa-B-dependent production of CXCL1, CXCL2 and CCL9 cytokines, via MYD88 signaling pathway, and CCL5 cytokine, via TICAM1 signaling pathway. In myeloid dendritic cells, vesicular stomatitis virus glycoprotein G but not LPS promotes the activation of IRF7, leading to type I IFN production in a CD14-dependent manner. The protein is Toll-like receptor 4 (TLR4) of Pan paniscus (Pygmy chimpanzee).